Here is a 125-residue protein sequence, read N- to C-terminus: Ribosome-binding factor A (125 aa).

Belongs to the RbfA family. As to quaternary structure, monomer. Binds 30S ribosomal subunits, but not 50S ribosomal subunits or 70S ribosomes.

It localises to the cytoplasm. One of several proteins that assist in the late maturation steps of the functional core of the 30S ribosomal subunit. Associates with free 30S ribosomal subunits (but not with 30S subunits that are part of 70S ribosomes or polysomes). Required for efficient processing of 16S rRNA. May interact with the 5'-terminal helix region of 16S rRNA. The polypeptide is Ribosome-binding factor A (Xylella fastidiosa (strain M23)).